The sequence spans 425 residues: Adenylosuccinate synthetase (425 aa).

GTP-binding positions include 12-18 and 40-42; these read GDEGKGK and GHT. The active-site Proton acceptor is the Asp-13. Mg(2+) is bound by residues Asp-13 and Gly-40. IMP contacts are provided by residues 13–16, 38–41, Thr-126, Arg-140, Gln-221, Thr-236, and Arg-300; these read DEGK and NAGH. His-41 functions as the Proton donor in the catalytic mechanism. 296 to 302 contacts substrate; sequence ATTGRPR. GTP contacts are provided by residues Arg-302, 328–330, and 410–412; these read KLD and STG.

Belongs to the adenylosuccinate synthetase family. In terms of assembly, homodimer. Requires Mg(2+) as cofactor.

The protein localises to the cytoplasm. It carries out the reaction IMP + L-aspartate + GTP = N(6)-(1,2-dicarboxyethyl)-AMP + GDP + phosphate + 2 H(+). It functions in the pathway purine metabolism; AMP biosynthesis via de novo pathway; AMP from IMP: step 1/2. In terms of biological role, plays an important role in the de novo pathway of purine nucleotide biosynthesis. Catalyzes the first committed step in the biosynthesis of AMP from IMP. The protein is Adenylosuccinate synthetase of Thermodesulfovibrio yellowstonii (strain ATCC 51303 / DSM 11347 / YP87).